The primary structure comprises 115 residues: Replication initiation control protein YabA (115 aa).

Residues histidine 85, cysteine 87, cysteine 101, and cysteine 104 each coordinate Zn(2+).

The protein belongs to the YabA family. As to quaternary structure, homotetramer. Interacts with both DnaA and DnaN, acting as a bridge between these two proteins. Requires Zn(2+) as cofactor.

The protein resides in the cytoplasm. The protein localises to the nucleoid. Its function is as follows. Involved in control of chromosome replication initiation. Inhibits the cooperative binding of DnaA to the oriC region, thus negatively regulating initiation of chromosome replication. Inhibits the ability of DnaA-ATP to form a helix on DNA; does not disassemble preformed DnaA-DNA helices. Decreases the residence time of DnaA on the chromosome at its binding sites (oriC, replication forks and promoter-binding sites). Tethers DnaA to the replication machinery via the DNA polymerase beta sliding clamp subunit (dnaN). Associates with oriC and other DnaA targets on the chromosome in a DnaA-dependent manner. This is Replication initiation control protein YabA from Lactiplantibacillus plantarum (strain ATCC BAA-793 / NCIMB 8826 / WCFS1) (Lactobacillus plantarum).